We begin with the raw amino-acid sequence, 613 residues long: DBH-like monooxygenase protein 1 (613 aa).

Residues 1-19 (MCCWPLLLLWGLLPGTAAG) form the signal peptide. At 20–592 (GSGRTYPHRT…TSSSSSLHRD (573 aa)) the chain is on the lumenal side. One can recognise a DOMON domain in the interval 35-148 (GKYWLGWSQR…STVRVIWAYH (114 aa)). Asparagine 114 is a glycosylation site (N-linked (GlcNAc...) asparagine). Tyrosine 203 is a catalytic residue. Cystine bridges form between cysteine 205/cysteine 257 and cysteine 242/cysteine 269. Positions 235 and 236 each coordinate Cu cation. Asparagine 247 carries N-linked (GlcNAc...) asparagine glycosylation. The Cu cation site is built by histidine 307, histidine 389, histidine 391, and methionine 464. Disulfide bonds link cysteine 364–cysteine 480, cysteine 368–cysteine 550, and cysteine 443–cysteine 465. The active site involves histidine 389. 2 N-linked (GlcNAc...) asparagine glycosylation sites follow: asparagine 476 and asparagine 517. A helical membrane pass occupies residues 593–613 (FSINLLVCLLLLSCTLSTKSL).

Belongs to the copper type II ascorbate-dependent monooxygenase family. The cofactor is Cu(2+). N-glycosylated. In terms of tissue distribution, highly expressed in lung, kidney, brain and spinal cord.

The protein resides in the endoplasmic reticulum membrane. The polypeptide is DBH-like monooxygenase protein 1 (MOXD1) (Homo sapiens (Human)).